The sequence spans 705 residues: MSKQRIYEYAKELNLKSKEIIDELKSMNIEVSNHMQALEDDQIKALDKKFKKEQKNDNKQSTQNNHQKSNNQNQNKGQQKDNKKNQQQNNKGNKGNKKNNRNNKKNNKNNKPQNQPAAPKEIPSKVTYQEGITVGEFADKLNVESSEIIKKLFLLGIVANINQSLNQETIELIADDYGVEVEEEVVINEEDLSIYFEDEKDDPEAIERPAVVTIMGHVDHGKTTLLDSIRHTKVTAGEAGGITQHIGAYQIENDGKKITFLDTPGHAAFTTMRARGAQVTDITILVVAADDGVMPQTIEAINHAKEAEVPIIVAVNKIDKPTSNPDRVMQELTEYGLIPEDWGGETIFVPLSALSGDGIDDLLEMIGLVAEVQELKANPKNRAVGTVIEAELDKSRGPSASLLVQNGTLNVGDAIVVGNTYGRIRAMVNDLGQRIKTAGPSTPVEITGINDVPQAGDRFVVFSDEKQARRIGESRHEASIIQQRQESKNVSLDNLFEQMKQGEMKDLNVIIKGDVQGSVEALAASLMKIDVEGVNVRIIHTAVGAINESDVTLANASNGIIIGFNVRPDSGAKRAAEAENVDMRLHRVIYNVIEEIESAMKGLLDPEFEEQVIGQAEVRQTFKVSKVGTIAGCYVTEGKITRNAGVRIIRDGIVQYEGELDTLKRFKDDAKEVAKGYECGITIENYNDLKEGDVIEAFEMVEIKR.

A disordered region spans residues 40–124 (DDQIKALDKK…QPAAPKEIPS (85 aa)). Positions 41 to 58 (DQIKALDKKFKKEQKNDN) are enriched in basic and acidic residues. Over residues 59 to 77 (KQSTQNNHQKSNNQNQNKG) the composition is skewed to low complexity. Positions 94–108 (KGNKKNNRNNKKNNK) are enriched in basic residues. In terms of domain architecture, tr-type G spans 207–376 (ERPAVVTIMG…GLVAEVQELK (170 aa)). Residues 216-223 (GHVDHGKT) form a G1 region. Residue 216–223 (GHVDHGKT) participates in GTP binding. Residues 241–245 (GITQH) are G2. The segment at 262–265 (DTPG) is G3. GTP is bound by residues 262–266 (DTPGH) and 316–319 (NKID). A G4 region spans residues 316 to 319 (NKID). The segment at 352–354 (SAL) is G5.

This sequence belongs to the TRAFAC class translation factor GTPase superfamily. Classic translation factor GTPase family. IF-2 subfamily.

It is found in the cytoplasm. In terms of biological role, one of the essential components for the initiation of protein synthesis. Protects formylmethionyl-tRNA from spontaneous hydrolysis and promotes its binding to the 30S ribosomal subunits. Also involved in the hydrolysis of GTP during the formation of the 70S ribosomal complex. This chain is Translation initiation factor IF-2, found in Staphylococcus aureus (strain USA300).